The chain runs to 440 residues: D-serine dehydratase (440 aa).

Lys116 carries the N6-(pyridoxal phosphate)lysine modification.

Belongs to the serine/threonine dehydratase family. DsdA subfamily. In terms of assembly, monomer. It depends on pyridoxal 5'-phosphate as a cofactor.

The enzyme catalyses D-serine = pyruvate + NH4(+). This chain is D-serine dehydratase, found in Salmonella enteritidis PT4 (strain P125109).